The primary structure comprises 470 residues: 3-isopropylmalate dehydratase large subunit (470 aa).

The [4Fe-4S] cluster site is built by Cys349, Cys409, and Cys412.

This sequence belongs to the aconitase/IPM isomerase family. LeuC type 1 subfamily. Heterodimer of LeuC and LeuD. Requires [4Fe-4S] cluster as cofactor.

It carries out the reaction (2R,3S)-3-isopropylmalate = (2S)-2-isopropylmalate. It functions in the pathway amino-acid biosynthesis; L-leucine biosynthesis; L-leucine from 3-methyl-2-oxobutanoate: step 2/4. Its function is as follows. Catalyzes the isomerization between 2-isopropylmalate and 3-isopropylmalate, via the formation of 2-isopropylmaleate. In Methylobacterium radiotolerans (strain ATCC 27329 / DSM 1819 / JCM 2831 / NBRC 15690 / NCIMB 10815 / 0-1), this protein is 3-isopropylmalate dehydratase large subunit.